A 315-amino-acid chain; its full sequence is Acetyl-coenzyme A carboxylase carboxyl transferase subunit alpha (315 aa).

The CoA carboxyltransferase C-terminal domain occupies 40–293 (LQDKSKTLTE…REELSSQLAM (254 aa)).

Belongs to the AccA family. Acetyl-CoA carboxylase is a heterohexamer composed of biotin carboxyl carrier protein (AccB), biotin carboxylase (AccC) and two subunits each of ACCase subunit alpha (AccA) and ACCase subunit beta (AccD).

It localises to the cytoplasm. It carries out the reaction N(6)-carboxybiotinyl-L-lysyl-[protein] + acetyl-CoA = N(6)-biotinyl-L-lysyl-[protein] + malonyl-CoA. It participates in lipid metabolism; malonyl-CoA biosynthesis; malonyl-CoA from acetyl-CoA: step 1/1. In terms of biological role, component of the acetyl coenzyme A carboxylase (ACC) complex. First, biotin carboxylase catalyzes the carboxylation of biotin on its carrier protein (BCCP) and then the CO(2) group is transferred by the carboxyltransferase to acetyl-CoA to form malonyl-CoA. The sequence is that of Acetyl-coenzyme A carboxylase carboxyl transferase subunit alpha from Pseudomonas syringae pv. tomato (strain ATCC BAA-871 / DC3000).